The sequence spans 255 residues: tRNA (guanine-N(1)-)-methyltransferase (255 aa).

Residues glycine 113 and valine 133–leucine 138 each bind S-adenosyl-L-methionine.

The protein belongs to the RNA methyltransferase TrmD family. Homodimer.

The protein resides in the cytoplasm. The catalysed reaction is guanosine(37) in tRNA + S-adenosyl-L-methionine = N(1)-methylguanosine(37) in tRNA + S-adenosyl-L-homocysteine + H(+). Specifically methylates guanosine-37 in various tRNAs. This chain is tRNA (guanine-N(1)-)-methyltransferase, found in Francisella philomiragia subsp. philomiragia (strain ATCC 25017 / CCUG 19701 / FSC 153 / O#319-036).